Reading from the N-terminus, the 367-residue chain is UDP-N-acetylglucosamine--N-acetylmuramyl-(pentapeptide) pyrophosphoryl-undecaprenol N-acetylglucosamine transferase (367 aa).

UDP-N-acetyl-alpha-D-glucosamine is bound by residues 15–17 (TGG), N127, R163, S191, I249, and Q294.

It belongs to the glycosyltransferase 28 family. MurG subfamily.

Its subcellular location is the cell inner membrane. It carries out the reaction di-trans,octa-cis-undecaprenyl diphospho-N-acetyl-alpha-D-muramoyl-L-alanyl-D-glutamyl-meso-2,6-diaminopimeloyl-D-alanyl-D-alanine + UDP-N-acetyl-alpha-D-glucosamine = di-trans,octa-cis-undecaprenyl diphospho-[N-acetyl-alpha-D-glucosaminyl-(1-&gt;4)]-N-acetyl-alpha-D-muramoyl-L-alanyl-D-glutamyl-meso-2,6-diaminopimeloyl-D-alanyl-D-alanine + UDP + H(+). The protein operates within cell wall biogenesis; peptidoglycan biosynthesis. Functionally, cell wall formation. Catalyzes the transfer of a GlcNAc subunit on undecaprenyl-pyrophosphoryl-MurNAc-pentapeptide (lipid intermediate I) to form undecaprenyl-pyrophosphoryl-MurNAc-(pentapeptide)GlcNAc (lipid intermediate II). In Burkholderia cenocepacia (strain ATCC BAA-245 / DSM 16553 / LMG 16656 / NCTC 13227 / J2315 / CF5610) (Burkholderia cepacia (strain J2315)), this protein is UDP-N-acetylglucosamine--N-acetylmuramyl-(pentapeptide) pyrophosphoryl-undecaprenol N-acetylglucosamine transferase.